The primary structure comprises 332 residues: Ferredoxin--NADP reductase (332 aa).

T20, E39, Q47, Y52, V92, F126, D288, and S329 together coordinate FAD.

This sequence belongs to the ferredoxin--NADP reductase type 2 family. Homodimer. Requires FAD as cofactor.

It catalyses the reaction 2 reduced [2Fe-2S]-[ferredoxin] + NADP(+) + H(+) = 2 oxidized [2Fe-2S]-[ferredoxin] + NADPH. The sequence is that of Ferredoxin--NADP reductase from Geobacillus thermodenitrificans (strain NG80-2).